A 397-amino-acid polypeptide reads, in one-letter code: Argininosuccinate synthase (397 aa).

8-16 lines the ATP pocket; the sequence is AYSGGLDTS. The L-citrulline site is built by tyrosine 86 and serine 91. ATP is bound at residue glycine 116. L-aspartate-binding residues include threonine 118, asparagine 122, and aspartate 123. Asparagine 122 is a binding site for L-citrulline. Residues arginine 126, serine 175, serine 184, glutamate 260, and tyrosine 272 each contribute to the L-citrulline site.

It belongs to the argininosuccinate synthase family. Type 1 subfamily. Homotetramer.

Its subcellular location is the cytoplasm. The catalysed reaction is L-citrulline + L-aspartate + ATP = 2-(N(omega)-L-arginino)succinate + AMP + diphosphate + H(+). Its pathway is amino-acid biosynthesis; L-arginine biosynthesis; L-arginine from L-ornithine and carbamoyl phosphate: step 2/3. The sequence is that of Argininosuccinate synthase from Clostridium botulinum (strain 657 / Type Ba4).